The chain runs to 149 residues: Myosin light chain 1 (149 aa).

EF-hand domains follow at residues Ser2 to Asn37, Ala81 to Lys116, and Leu117 to Gln149. Asp15, Asp94, Thr98, Lys100, and Asp105 together coordinate Ca(2+). A Glycyl lysine isopeptide (Lys-Gly) (interchain with G-Cter in ubiquitin) cross-link involves residue Lys116. The Ca(2+) site is built by Asp123, Lys127, and Asp132.

In terms of assembly, interacts with MYO1, MYO2 and IQG1 by binding to their IQ domains. Interacts with SEC4.

It is found in the bud neck. Its subcellular location is the bud tip. Essential light chain for the class II conventional myosin MYO1. Also acts as light chain for the class V unconventional myosin MYO2 and for IQG1. Involved in the assembly of the contractile actomyosin ring at the bud neck during cytokinesis by recruiting IQG1 to the bud neck. Also required for chitin and MYO2-dependent secretory vesicle deposition to the center of the bud neck for septum formation. May stabilize MYO2 by binding to its IQ domains. Its major function is probably not to regulate MYO1 activity, but rather to coordinate actin ring formation and targeted membrane deposition during cytokinesis via its interactions with MYO1, IQG1 and MYO2. In Saccharomyces cerevisiae (strain ATCC 204508 / S288c) (Baker's yeast), this protein is Myosin light chain 1 (MLC1).